An 82-amino-acid chain; its full sequence is Large ribosomal subunit protein bL28 (82 aa).

The protein belongs to the bacterial ribosomal protein bL28 family.

The polypeptide is Large ribosomal subunit protein bL28 (Vesicomyosocius okutanii subsp. Calyptogena okutanii (strain HA)).